The sequence spans 1175 residues: Chromosome partition protein Smc (1175 aa).

32–39 is an ATP binding site; that stretch reads PNGCGKSN. The stretch at 170–504 forms a coiled coil; the sequence is VSKYKERRRE…ALKALQEKVK (335 aa). Residues 524–625 form the SMC hinge domain; sequence LWSRIAIEPG…YTAPTLEEAL (102 aa). 2 coiled-coil regions span residues 684–918 and 944–1022; these read DESR…FQLK and SQSI…ELLS. Positions 807–849 are disordered; that stretch reads RQAQEATFSRRSLEARRGELSRTIETASQQARSLADEQQRAQD. The span at 817 to 828 shows a compositional bias: basic and acidic residues; the sequence is RSLEARRGELSR. The segment covering 829 to 838 has biased composition (polar residues); that stretch reads TIETASQQAR. Over residues 840-849 the composition is skewed to basic and acidic residues; it reads LADEQQRAQD.

The protein belongs to the SMC family. As to quaternary structure, homodimer.

It is found in the cytoplasm. In terms of biological role, required for chromosome condensation and partitioning. The polypeptide is Chromosome partition protein Smc (Delftia acidovorans (strain DSM 14801 / SPH-1)).